Reading from the N-terminus, the 318-residue chain is MQNNSTSFPTAIFLMGPTASGKTDLAIKLHETLPVEIISVDSALIYKGMDIGTAKPSKEELALAPHRLIDILDPAESYSAMNFRADALREMTDITAQGKIPLLVGGTMLYYKALIEGLSPLPNADEKIRSEIEARAQQTGWAVLHQELAKIDPASAARINPNDSQRINRALEVFYLTGKSLTELTAQKGDALPYNVLQFAIAPEDRSILHERIELRFKKMVELGFKAEVEKLYARSDLSPDLPSIRCVGYRQMWEHLRGDYGFDEAIYRGICATRQLAKRQITWLRGWKTPIRWLNSLQNEKNQKKIQQVFYLSMQNR.

16–23 (GPTASGKT) contacts ATP. 18 to 23 (TASGKT) is a binding site for substrate. Interaction with substrate tRNA stretches follow at residues 41–44 (DSAL), 165–169 (QRINR), 246–251 (RCVGYR), and 279–286 (KRQITWLR).

Belongs to the IPP transferase family. As to quaternary structure, monomer. Mg(2+) serves as cofactor.

It catalyses the reaction adenosine(37) in tRNA + dimethylallyl diphosphate = N(6)-dimethylallyladenosine(37) in tRNA + diphosphate. Functionally, catalyzes the transfer of a dimethylallyl group onto the adenine at position 37 in tRNAs that read codons beginning with uridine, leading to the formation of N6-(dimethylallyl)adenosine (i(6)A). In Actinobacillus succinogenes (strain ATCC 55618 / DSM 22257 / CCUG 43843 / 130Z), this protein is tRNA dimethylallyltransferase.